A 457-amino-acid chain; its full sequence is Putative F-box protein At3g58860 (457 aa).

Positions 6–54 constitute an F-box domain; that stretch reads MDLFSKLPDEVISHILSSLPTKEAASTSVLAKKWRYLFAFVPSLDFNDS.

This chain is Putative F-box protein At3g58860, found in Arabidopsis thaliana (Mouse-ear cress).